Reading from the N-terminus, the 529-residue chain is Peptide chain release factor 3 (529 aa).

The region spanning 11–280 is the tr-type G domain; that stretch reads AKRRTFAIIS…GLVEWAPAPM (270 aa). Residues 20 to 27, 88 to 92, and 142 to 145 contribute to the GTP site; these read SHPDAGKT, DTPGH, and NKLD.

This sequence belongs to the TRAFAC class translation factor GTPase superfamily. Classic translation factor GTPase family. PrfC subfamily.

The protein localises to the cytoplasm. Functionally, increases the formation of ribosomal termination complexes and stimulates activities of RF-1 and RF-2. It binds guanine nucleotides and has strong preference for UGA stop codons. It may interact directly with the ribosome. The stimulation of RF-1 and RF-2 is significantly reduced by GTP and GDP, but not by GMP. The sequence is that of Peptide chain release factor 3 from Shigella flexneri serotype 5b (strain 8401).